The primary structure comprises 125 residues: Ribonuclease P protein component (125 aa).

Belongs to the RnpA family. Consists of a catalytic RNA component (M1 or rnpB) and a protein subunit.

The catalysed reaction is Endonucleolytic cleavage of RNA, removing 5'-extranucleotides from tRNA precursor.. Functionally, RNaseP catalyzes the removal of the 5'-leader sequence from pre-tRNA to produce the mature 5'-terminus. It can also cleave other RNA substrates such as 4.5S RNA. The protein component plays an auxiliary but essential role in vivo by binding to the 5'-leader sequence and broadening the substrate specificity of the ribozyme. This chain is Ribonuclease P protein component, found in Oleidesulfovibrio alaskensis (strain ATCC BAA-1058 / DSM 17464 / G20) (Desulfovibrio alaskensis).